A 256-amino-acid polypeptide reads, in one-letter code: Thiazole synthase (256 aa).

Lys96 serves as the catalytic Schiff-base intermediate with DXP. 1-deoxy-D-xylulose 5-phosphate-binding positions include Gly157, 184 to 185 (AG), and 206 to 207 (NT).

This sequence belongs to the ThiG family. As to quaternary structure, homotetramer. Forms heterodimers with either ThiH or ThiS.

It localises to the cytoplasm. It catalyses the reaction [ThiS sulfur-carrier protein]-C-terminal-Gly-aminoethanethioate + 2-iminoacetate + 1-deoxy-D-xylulose 5-phosphate = [ThiS sulfur-carrier protein]-C-terminal Gly-Gly + 2-[(2R,5Z)-2-carboxy-4-methylthiazol-5(2H)-ylidene]ethyl phosphate + 2 H2O + H(+). It functions in the pathway cofactor biosynthesis; thiamine diphosphate biosynthesis. Functionally, catalyzes the rearrangement of 1-deoxy-D-xylulose 5-phosphate (DXP) to produce the thiazole phosphate moiety of thiamine. Sulfur is provided by the thiocarboxylate moiety of the carrier protein ThiS. In vitro, sulfur can be provided by H(2)S. The protein is Thiazole synthase of Roseobacter denitrificans (strain ATCC 33942 / OCh 114) (Erythrobacter sp. (strain OCh 114)).